A 157-amino-acid chain; its full sequence is S-ribosylhomocysteine lyase (157 aa).

Fe cation-binding residues include histidine 54, histidine 58, and cysteine 124.

It belongs to the LuxS family. As to quaternary structure, homodimer. Fe cation is required as a cofactor.

It carries out the reaction S-(5-deoxy-D-ribos-5-yl)-L-homocysteine = (S)-4,5-dihydroxypentane-2,3-dione + L-homocysteine. Functionally, involved in the synthesis of autoinducer 2 (AI-2) which is secreted by bacteria and is used to communicate both the cell density and the metabolic potential of the environment. The regulation of gene expression in response to changes in cell density is called quorum sensing. Catalyzes the transformation of S-ribosylhomocysteine (RHC) to homocysteine (HC) and 4,5-dihydroxy-2,3-pentadione (DPD). The protein is S-ribosylhomocysteine lyase of Lactobacillus helveticus (strain DPC 4571).